A 488-amino-acid polypeptide reads, in one-letter code: Aspartyl/glutamyl-tRNA(Asn/Gln) amidotransferase subunit B (488 aa).

Belongs to the GatB/GatE family. GatB subfamily. Heterotrimer of A, B and C subunits.

It catalyses the reaction L-glutamyl-tRNA(Gln) + L-glutamine + ATP + H2O = L-glutaminyl-tRNA(Gln) + L-glutamate + ADP + phosphate + H(+). The catalysed reaction is L-aspartyl-tRNA(Asn) + L-glutamine + ATP + H2O = L-asparaginyl-tRNA(Asn) + L-glutamate + ADP + phosphate + 2 H(+). In terms of biological role, allows the formation of correctly charged Asn-tRNA(Asn) or Gln-tRNA(Gln) through the transamidation of misacylated Asp-tRNA(Asn) or Glu-tRNA(Gln) in organisms which lack either or both of asparaginyl-tRNA or glutaminyl-tRNA synthetases. The reaction takes place in the presence of glutamine and ATP through an activated phospho-Asp-tRNA(Asn) or phospho-Glu-tRNA(Gln). The chain is Aspartyl/glutamyl-tRNA(Asn/Gln) amidotransferase subunit B from Chlamydia trachomatis serovar L2 (strain ATCC VR-902B / DSM 19102 / 434/Bu).